Consider the following 102-residue polypeptide: Small ribosomal subunit protein bS6 (102 aa).

The protein belongs to the bacterial ribosomal protein bS6 family.

In terms of biological role, binds together with bS18 to 16S ribosomal RNA. In Deinococcus geothermalis (strain DSM 11300 / CIP 105573 / AG-3a), this protein is Small ribosomal subunit protein bS6.